We begin with the raw amino-acid sequence, 190 residues long: Segregation and condensation protein B (190 aa).

This sequence belongs to the ScpB family. As to quaternary structure, homodimer. Homodimerization may be required to stabilize the binding of ScpA to the Smc head domains. Component of a cohesin-like complex composed of ScpA, ScpB and the Smc homodimer, in which ScpA and ScpB bind to the head domain of Smc. The presence of the three proteins is required for the association of the complex with DNA.

It localises to the cytoplasm. Participates in chromosomal partition during cell division. May act via the formation of a condensin-like complex containing Smc and ScpA that pull DNA away from mid-cell into both cell halves. This Bacillus cereus (strain B4264) protein is Segregation and condensation protein B.